The chain runs to 188 residues: Elongation factor P (188 aa).

This sequence belongs to the elongation factor P family.

Its subcellular location is the cytoplasm. It participates in protein biosynthesis; polypeptide chain elongation. Functionally, involved in peptide bond synthesis. Stimulates efficient translation and peptide-bond synthesis on native or reconstituted 70S ribosomes in vitro. Probably functions indirectly by altering the affinity of the ribosome for aminoacyl-tRNA, thus increasing their reactivity as acceptors for peptidyl transferase. This Bacteroides thetaiotaomicron (strain ATCC 29148 / DSM 2079 / JCM 5827 / CCUG 10774 / NCTC 10582 / VPI-5482 / E50) protein is Elongation factor P.